Consider the following 202-residue polypeptide: MATLIYVDKEIGEPGTRVAAKDVLKLESRPSIKALDGISQVLTRRFGKTYDAPSALPKATRKALGTVNRATEKSVKTNGPRKQKQPSFSAKKMTEKTVKTKSSVPASDDAYPEIEKFFPFNLLDFESFDLPEERQIAHLPLSGVPLMILDEEGELEKLFQLGPPSPVKMPSPPWECNLLQSPSSILSTLDVELPAVCYDIDI.

Residues 60 to 105 (TRKALGTVNRATEKSVKTNGPRKQKQPSFSAKKMTEKTVKTKSSVP) are disordered. The D-box signature appears at 61-64 (RKAL). The short motif at 163–173 (PPSPVKMPSPP) is the SH3-binding element.

The protein belongs to the securin family. Expressed at low levels in the pituitary, liver, spleen, prostate, testis, ovary, small intestine and colon. Also expressed in various pituitary, testicular, liver and ovarian tumors.

The protein localises to the cytoplasm. It localises to the nucleus. This chain is Securin-2 (PTTG2), found in Homo sapiens (Human).